Consider the following 196-residue polypeptide: MLLLTLTMIIAAYLIGSISSAILVCRFSGLPDPRTTGSKNPGATNVLRISNKFTAATVLFLDILKGTIPVWGAYFLKIDSLYLGFIGVSACLGHMYPIFFNFKGGKAVATALGTLLPIGFTLGGLLILTWVLVVKLTKYSSLAAIVTVSIAPLYVYFLKPLYVYPTLMLSALILFRHRDNIKRLLKGTESKITHKI.

Transmembrane regions (helical) follow at residues 4–24 (LTLTMIIAAYLIGSISSAILV), 56–76 (ATVLFLDILKGTIPVWGAYFL), 80–100 (SLYLGFIGVSACLGHMYPIFF), 114–134 (TLLPIGFTLGGLLILTWVLVV), and 155–175 (VYFLKPLYVYPTLMLSALILF).

It belongs to the PlsY family. Probably interacts with PlsX.

It localises to the cell inner membrane. It carries out the reaction an acyl phosphate + sn-glycerol 3-phosphate = a 1-acyl-sn-glycero-3-phosphate + phosphate. It participates in lipid metabolism; phospholipid metabolism. Its function is as follows. Catalyzes the transfer of an acyl group from acyl-phosphate (acyl-PO(4)) to glycerol-3-phosphate (G3P) to form lysophosphatidic acid (LPA). This enzyme utilizes acyl-phosphate as fatty acyl donor, but not acyl-CoA or acyl-ACP. The chain is Glycerol-3-phosphate acyltransferase from Colwellia psychrerythraea (strain 34H / ATCC BAA-681) (Vibrio psychroerythus).